A 218-amino-acid polypeptide reads, in one-letter code: Type II restriction enzyme KpnI (218 aa).

The catalysed reaction is Endonucleolytic cleavage of DNA to give specific double-stranded fragments with terminal 5'-phosphates.. Functionally, a P subtype restriction enzyme that recognizes the double-stranded sequence 5'-GGTACC-3' and cleaves after C-5. This chain is Type II restriction enzyme KpnI, found in Klebsiella pneumoniae.